The chain runs to 523 residues: MPSFRDDHIIVIQTGSLYHRATFGLAESLEPPTIRVRTRVGKNDNGEYVFTNKEDINMEDPNVKTDETKVETSESTSEQPSNSNVTEEKNMGSSFHSECKVDDFTPLPNEIQPIQRGRVVDWEALKAFWKHLYSLLLKDPNDTTFRYPVCLVIPTYWSLYDRELATQFFFEECQVPGFTIAYEPLMGLYAIGILHGLVIDIGYEKTDITPILDGQIIFTATQQLPLGGRYMTQHLQNLLRESLPTLKSSGQYVSKEDITELFAEQVKCSEIAQVVRDEQDTAKDPVKALTSTNNVEEEDPAEDIGKIIASGQTRAYLAQKEREKNGESEKDEKPDNTDVEFQTIAIEPLGDCIVGRERFKICEPIFHRPSNETVSLPEAIYITIKNYAANYKRRNDLWENIIVLGCGSRIRGFRECLIQQLQFKYQLSGSLEPYYAAQGTDSILGMTTMPPTPYPALINPCKILPDYFPSWKPDAGTNAMFEELAFLGGSIVAKTSFNESVSSHYVTLEEYAQHGPTAIHTKQ.

Positions isoleucine 56–threonine 72 are enriched in basic and acidic residues. Disordered stretches follow at residues isoleucine 56–glycine 92 and glutamine 319–valine 339. Residues glutamine 79 to glycine 92 are compositionally biased toward polar residues. The segment covering glutamine 319–asparagine 336 has biased composition (basic and acidic residues).

This sequence belongs to the actin family. Component of the RSC complex composed of at least arp9, arp42, rsc1, rsc4, rsc7, rsc9, rsc58, sfh1, snf21, ssr1, ssr2, ssr3 and ssr4. The complex interacts with histone and histone variant components of centromeric chromatin. Component of the SWI/SNF global transcription activator complex composed of at least arp9, arp42, snf5, snf22, snf30, sbf59, sol1, ssr1, ssr2, ssr3, ssr4 and tfg3.

It is found in the cytoplasm. Its subcellular location is the nucleus. Functionally, component of the chromatin structure remodeling complex (RSC), which is involved in transcription regulation and nucleosome positioning. Controls particularly membrane and organelle development genes. Part of the SWI/SNF complex, an ATP-dependent chromatin remodeling complex, required for the positive and negative regulation of gene expression of a large number of genes. It changes chromatin structure by altering DNA-histone contacts within a nucleosome, leading eventually to a change in nucleosome position, thus facilitating or repressing binding of gene-specific transcription factors. This Schizosaccharomyces pombe (strain 972 / ATCC 24843) (Fission yeast) protein is SWI/SNF and RSC complexes subunit arp9 (arp9).